Consider the following 235-residue polypeptide: Phosphoribosylaminoimidazole-succinocarboxamide synthase (235 aa).

Belongs to the SAICAR synthetase family.

The enzyme catalyses 5-amino-1-(5-phospho-D-ribosyl)imidazole-4-carboxylate + L-aspartate + ATP = (2S)-2-[5-amino-1-(5-phospho-beta-D-ribosyl)imidazole-4-carboxamido]succinate + ADP + phosphate + 2 H(+). The protein operates within purine metabolism; IMP biosynthesis via de novo pathway; 5-amino-1-(5-phospho-D-ribosyl)imidazole-4-carboxamide from 5-amino-1-(5-phospho-D-ribosyl)imidazole-4-carboxylate: step 1/2. This is Phosphoribosylaminoimidazole-succinocarboxamide synthase from Exiguobacterium sibiricum (strain DSM 17290 / CCUG 55495 / CIP 109462 / JCM 13490 / 255-15).